Consider the following 386-residue polypeptide: MILGSLSRAGPLPLLRQPPIMQPPLDLKQILPFPLEPAPTLGLFSNYSTMDPVQKAVLSHTFGGPLLKTKRPVISCNICQIRFNSQSQAEAHYKGNRHARRVKGIEAAKTRGREPGVREPGDPAPPGSTPTNGDGVAPRPVSMENGLGPAPGSPEKQPGSPSPPSIPETGQGVTKGEGGTPAPASLPGGSKEEEEKAKRLLYCALCKVAVNSLSQLEAHNKGTKHKTILEARSGLGPIKAYPRLGPPTPGEPEAPAQDRTFHCEICNVKVNSEVQLKQHISSRRHRDGVAGKPNPLLSRHKKSRGAGELAGTLTFSKELPKSLAGGLLPSPLAVAAVMAAAAGSPLSLRPAPAAPLLQGPPITHPLLHPAPGPIRTAHGPILFSPY.

A Matrin-type 1 zinc finger spans residues 74–98 (ISCNICQIRFNSQSQAEAHYKGNRH). A disordered region spans residues 90–193 (EAHYKGNRHA…ASLPGGSKEE (104 aa)). Positions 103 to 121 (KGIEAAKTRGREPGVREPG) are enriched in basic and acidic residues. The tract at residues 145-351 (NGLGPAPGSP…AGSPLSLRPA (207 aa)) is necessary for binding to ITPR1, CEBPA and p53/TP53 mRNAs. Residue S185 is modified to Phosphoserine. The Matrin-type 2 zinc finger occupies 201 to 225 (LYCALCKVAVNSLSQLEAHNKGTKH). At T248 the chain carries Phosphothreonine. The Matrin-type 3 zinc-finger motif lies at 261–285 (FHCEICNVKVNSEVQLKQHISSRRH). The segment at 279–309 (HISSRRHRDGVAGKPNPLLSRHKKSRGAGEL) is disordered.

As to quaternary structure, interacts with ELAVL1; the interaction is indirect, mRNA-dependent and may regulate p53/TP53 expression. Interacts with p53/TP53; the interaction is direct and enhances p53/TP53 transactivation functions on cell-cycle arrest target genes, resulting in growth arrest. In terms of processing, ubiquitinated upon prolonged exposure to genotoxic stress, which leads to proteasomal degradation of ZNF385A and releases p53/TP53 from cell-cycle arrest target gene promoters. Expressed predominantly in the retina.

It localises to the cytoplasm. Its subcellular location is the nucleus. The protein localises to the nucleolus. The protein resides in the cell projection. It is found in the dendrite. In terms of biological role, RNA-binding protein that affects the localization and the translation of a subset of mRNA. May play a role in adipogenesis through binding to the 3'-UTR of CEBPA mRNA and regulation of its translation. Targets ITPR1 mRNA to dendrites in Purkinje cells, and may regulate its activity-dependent translation. With ELAVL1, binds the 3'-UTR of p53/TP53 mRNAs to control their nuclear export induced by CDKN2A. Hence, may regulate p53/TP53 expression and mediate in part the CDKN2A anti-proliferative activity. May also bind CCNB1 mRNA. Alternatively, may also regulate p53/TP53 activity through direct protein-protein interaction. Interacts with p53/TP53 and promotes cell-cycle arrest over apoptosis enhancing preferentially the DNA binding and transactivation of p53/TP53 on cell-cycle arrest target genes over proapoptotic target genes. May also regulate the ubiquitination and stability of CDKN1A promoting DNA damage-induced cell cycle arrest. Also plays a role in megakaryocytes differentiation. This is Zinc finger protein 385A (ZNF385A) from Homo sapiens (Human).